A 371-amino-acid polypeptide reads, in one-letter code: Large ribosomal subunit protein bL27m (371 aa).

Residues 1 to 27 (MWNPILLDTSSFSFQKHVSGVFLQVRN) constitute a mitochondrion transit peptide.

The protein belongs to the bacterial ribosomal protein bL27 family. In terms of assembly, component of the mitochondrial large ribosomal subunit (mt-LSU). Mature yeast 74S mitochondrial ribosomes consist of a small (37S) and a large (54S) subunit. The 37S small subunit contains a 15S ribosomal RNA (15S mt-rRNA) and 34 different proteins. The 54S large subunit contains a 21S rRNA (21S mt-rRNA) and 46 different proteins.

The protein localises to the mitochondrion. In terms of biological role, component of the mitochondrial ribosome (mitoribosome), a dedicated translation machinery responsible for the synthesis of mitochondrial genome-encoded proteins, including at least some of the essential transmembrane subunits of the mitochondrial respiratory chain. The mitoribosomes are attached to the mitochondrial inner membrane and translation products are cotranslationally integrated into the membrane. The polypeptide is Large ribosomal subunit protein bL27m (MRP7) (Saccharomyces cerevisiae (strain ATCC 204508 / S288c) (Baker's yeast)).